The primary structure comprises 165 residues: Chorismate pyruvate-lyase (165 aa).

Substrate-binding residues include Met35, Arg77, Leu115, and Glu156.

Belongs to the UbiC family. In terms of assembly, monomer.

The protein localises to the cytoplasm. The enzyme catalyses chorismate = 4-hydroxybenzoate + pyruvate. The protein operates within cofactor biosynthesis; ubiquinone biosynthesis. Removes the pyruvyl group from chorismate, with concomitant aromatization of the ring, to provide 4-hydroxybenzoate (4HB) for the ubiquinone pathway. The sequence is that of Chorismate pyruvate-lyase from Escherichia coli O17:K52:H18 (strain UMN026 / ExPEC).